The primary structure comprises 74 residues: MRAIISLLLISTMVFGVIEAVSVQKSLKIFEGERGDCVGESQQCADWSGPYCCKGYYCTCQYFPKCICVNDNGK.

Positions 1–20 are cleaved as a signal peptide; sequence MRAIISLLLISTMVFGVIEA. Residues 21–34 constitute a propeptide that is removed on maturation; that stretch reads VSVQKSLKIFEGER. Cystine bridges form between Cys-37-Cys-53, Cys-44-Cys-58, Cys-52-Cys-68, and Cys-60-Cys-66. Asn-72 carries the post-translational modification Asparagine amide.

It belongs to the neurotoxin 07 (Beta/delta-agtx) family. 03 (aga-4) subfamily. Aga sub-subfamily. In terms of tissue distribution, expressed by the venom gland.

It is found in the secreted. Functionally, insecticidal neurotoxin that induces an irreversible spastic paralysis when injected into insects. Modifies presynaptic voltage-gated sodium channels (Nav), causing them to open at the normal resting potential of the nerve. This leads to spontaneous release of neurotransmitter and repetitive action potentials in motor neurons. The chain is U3-agatoxin-Ao1h from Agelena orientalis (Funnel-web spider).